Consider the following 1842-residue polypeptide: Fatty acid synthase subunit alpha (1842 aa).

The segment at 101–141 (PAEAPASTSSTPKVETAAAAAPAATPAPAPAQTSAPAAALP) is disordered. A compositionally biased stretch (low complexity) spans 116 to 139 (TAAAAAPAATPAPAPAQTSAPAAA). In terms of domain architecture, Carrier spans 145–220 (PKALEVLHTL…AIMQSSFNGS (76 aa)). Ser180 is subject to O-(pantetheine 4'-phosphoryl)serine. Ser604 carries the post-translational modification Phosphoserine. The 538-residue stretch at 1079 to 1616 (LQEVVIDHDL…QVGGQVIVIH (538 aa)) folds into the Ketosynthase family 3 (KS3) domain. Cys1262 acts as the For beta-ketoacyl synthase activity in catalysis. The tract at residues 1304-1332 (GATSNAAKETERGRTPQEMSRPATSTRDG) is disordered. Ser1412 bears the Phosphoserine mark. Active-site for beta-ketoacyl synthase activity residues include His1501 and His1542. Mg(2+)-binding residues include Asp1728, Val1729, and Glu1730. Acetyl-CoA contacts are provided by residues 1728–1730 (DVE), Tyr1754, Ser1764, 1773–1783 (EAVFKSLGISG), 1797–1800 (SSES), and 1827–1829 (ISH). Mg(2+) is bound by residues Ser1828 and His1829.

It belongs to the thiolase-like superfamily. Fungal fatty acid synthetase subunit alpha family. In terms of assembly, [Alpha(6)beta(6)] hexamers of two multifunctional subunits (alpha and beta).

The catalysed reaction is acetyl-CoA + n malonyl-CoA + 2n NADPH + 4n H(+) = a long-chain-acyl-CoA + n CoA + n CO2 + 2n NADP(+).. It catalyses the reaction a fatty acyl-[ACP] + malonyl-[ACP] + H(+) = a 3-oxoacyl-[ACP] + holo-[ACP] + CO2. It carries out the reaction a (3R)-hydroxyacyl-[ACP] + NADP(+) = a 3-oxoacyl-[ACP] + NADPH + H(+). Its function is as follows. Fatty acid synthetase catalyzes the formation of long-chain fatty acids from acetyl-CoA, malonyl-CoA and NADPH. The alpha subunit contains domains for: acyl carrier protein, 3-oxoacyl-[acyl-carrier-protein] reductase, and 3-oxoacyl-[acyl-carrier-protein] synthase. This subunit coordinates the binding of the six beta subunits to the enzyme complex. The polypeptide is Fatty acid synthase subunit alpha (fas2) (Schizosaccharomyces pombe (strain 972 / ATCC 24843) (Fission yeast)).